The following is a 545-amino-acid chain: Chaperonin GroEL (545 aa).

ATP-binding positions include 29–32, Lys50, 86–90, Gly413, and Asp495; these read TLGP and DGTTT.

The protein belongs to the chaperonin (HSP60) family. Forms a cylinder of 14 subunits composed of two heptameric rings stacked back-to-back. Interacts with the co-chaperonin GroES.

Its subcellular location is the cytoplasm. It carries out the reaction ATP + H2O + a folded polypeptide = ADP + phosphate + an unfolded polypeptide.. Together with its co-chaperonin GroES, plays an essential role in assisting protein folding. The GroEL-GroES system forms a nano-cage that allows encapsulation of the non-native substrate proteins and provides a physical environment optimized to promote and accelerate protein folding. The polypeptide is Chaperonin GroEL (Borreliella afzelii (strain PKo) (Borrelia afzelii)).